The chain runs to 22 residues: GLVSGLLNSVTGLLGNLAGGGL.

Belongs to the frog skin active peptide (FSAP) family. Plasticin subfamily. In terms of assembly, exhibits a propensity to self-association and forms helical oligomers in membrane-mimetic environments. In terms of tissue distribution, expressed by the skin glands.

It is found in the secreted. Its subcellular location is the target cell membrane. Functionally, has no antimicrobial activity against Gram-negative bacterium E.coli ATCC 25922, Gram-positive bacterium S.epidermidis ATCC 12228 and against fungus C.albicans ATCC 24433 at concentrations up to 100 uM. Has an anti-inflammatory effect, since it inhibits the production of the pro-inflammatory cytokines TNF-alpha and IL-1 beta. Has high activity of stimulation of insulin release, which may protect the species from being eaten by predators by causing fatal hypoglycemia. Is not cytotoxic to cancer line cells. Does not show hemolysis on mouse erythrocytes. Adopts a mixture of alpha-helical and beta-sheet structures. The sequence is that of Plasticin-TR from Phyllomedusa trinitatis (Trinidad leaf frog).